A 114-amino-acid polypeptide reads, in one-letter code: Hydrogenase maturation factor HypA (114 aa).

H2 is a Ni(2+) binding site. Zn(2+)-binding residues include C73, C76, C90, and C93.

It belongs to the HypA/HybF family.

In terms of biological role, involved in the maturation of [NiFe] hydrogenases. Required for nickel insertion into the metal center of the hydrogenase. This Chloroflexus aurantiacus (strain ATCC 29366 / DSM 635 / J-10-fl) protein is Hydrogenase maturation factor HypA.